A 228-amino-acid chain; its full sequence is Cytochrome c oxidase subunit 2 (228 aa).

The Mitochondrial intermembrane segment spans residues 1–14; sequence MAYPLQLGFQDATS. A helical transmembrane segment spans residues 15–45; that stretch reads PVMEELLHFHDHTLMIIFLISSLVLYIIMLM. At 46–59 the chain is on the mitochondrial matrix side; that stretch reads LTSKLVHTNMMNVQ. A helical transmembrane segment spans residues 60-87; that stretch reads EMEMIWTILPAIILILIALPSLHTLYMM. The Mitochondrial intermembrane portion of the chain corresponds to 88-228; sequence DEINNPLLTI…FENWSASLAQ (141 aa). Cu cation is bound by residues His-161, Cys-196, Glu-198, Cys-200, His-204, and Met-207. A Mg(2+)-binding site is contributed by Glu-198. Tyr-218 carries the phosphotyrosine modification.

It belongs to the cytochrome c oxidase subunit 2 family. In terms of assembly, component of the cytochrome c oxidase (complex IV, CIV), a multisubunit enzyme composed of 14 subunits. The complex is composed of a catalytic core of 3 subunits MT-CO1, MT-CO2 and MT-CO3, encoded in the mitochondrial DNA, and 11 supernumerary subunits COX4I, COX5A, COX5B, COX6A, COX6B, COX6C, COX7A, COX7B, COX7C, COX8 and NDUFA4, which are encoded in the nuclear genome. The complex exists as a monomer or a dimer and forms supercomplexes (SCs) in the inner mitochondrial membrane with NADH-ubiquinone oxidoreductase (complex I, CI) and ubiquinol-cytochrome c oxidoreductase (cytochrome b-c1 complex, complex III, CIII), resulting in different assemblies (supercomplex SCI(1)III(2)IV(1) and megacomplex MCI(2)III(2)IV(2)). Found in a complex with TMEM177, COA6, COX18, COX20, SCO1 and SCO2. Interacts with TMEM177 in a COX20-dependent manner. Interacts with COX20. Interacts with COX16. Cu cation is required as a cofactor.

The protein resides in the mitochondrion inner membrane. It catalyses the reaction 4 Fe(II)-[cytochrome c] + O2 + 8 H(+)(in) = 4 Fe(III)-[cytochrome c] + 2 H2O + 4 H(+)(out). Its function is as follows. Component of the cytochrome c oxidase, the last enzyme in the mitochondrial electron transport chain which drives oxidative phosphorylation. The respiratory chain contains 3 multisubunit complexes succinate dehydrogenase (complex II, CII), ubiquinol-cytochrome c oxidoreductase (cytochrome b-c1 complex, complex III, CIII) and cytochrome c oxidase (complex IV, CIV), that cooperate to transfer electrons derived from NADH and succinate to molecular oxygen, creating an electrochemical gradient over the inner membrane that drives transmembrane transport and the ATP synthase. Cytochrome c oxidase is the component of the respiratory chain that catalyzes the reduction of oxygen to water. Electrons originating from reduced cytochrome c in the intermembrane space (IMS) are transferred via the dinuclear copper A center (CU(A)) of subunit 2 and heme A of subunit 1 to the active site in subunit 1, a binuclear center (BNC) formed by heme A3 and copper B (CU(B)). The BNC reduces molecular oxygen to 2 water molecules using 4 electrons from cytochrome c in the IMS and 4 protons from the mitochondrial matrix. This is Cytochrome c oxidase subunit 2 (MT-CO2) from Loxodonta africana (African elephant).